The chain runs to 316 residues: HPr kinase/phosphorylase (316 aa).

Residues histidine 146 and lysine 167 contribute to the active site. Residue 161–168 (GESGLGKS) participates in ATP binding. A Mg(2+)-binding site is contributed by serine 168. Aspartate 185 acts as the Proton acceptor; for phosphorylation activity. Proton donor; for dephosphorylation activity in catalysis. Positions 209-218 (LEVRGIGLLD) are important for the catalytic mechanism of both phosphorylation and dephosphorylation. Position 210 (glutamate 210) interacts with Mg(2+). Arginine 252 is an active-site residue. Residues 273–278 (QVEAGR) are important for the catalytic mechanism of dephosphorylation.

Belongs to the HPrK/P family. Homohexamer. Mg(2+) is required as a cofactor.

It carries out the reaction [HPr protein]-L-serine + ATP = [HPr protein]-O-phospho-L-serine + ADP + H(+). The enzyme catalyses [HPr protein]-O-phospho-L-serine + phosphate + H(+) = [HPr protein]-L-serine + diphosphate. Functionally, catalyzes the ATP- as well as the pyrophosphate-dependent phosphorylation of a specific serine residue in HPr, a phosphocarrier protein of the phosphoenolpyruvate-dependent sugar phosphotransferase system (PTS). HprK/P also catalyzes the pyrophosphate-producing, inorganic phosphate-dependent dephosphorylation (phosphorolysis) of seryl-phosphorylated HPr (P-Ser-HPr). This is HPr kinase/phosphorylase from Polaromonas naphthalenivorans (strain CJ2).